Reading from the N-terminus, the 96-residue chain is (4S)-4-hydroxy-5-phosphonooxypentane-2,3-dione isomerase (96 aa).

The region spanning 2 to 91 (HVTLVEINVH…MTGPRKKRLF (90 aa)) is the ABM domain.

It belongs to the LsrG family. Homodimer.

The protein resides in the cytoplasm. It catalyses the reaction (2S)-2-hydroxy-3,4-dioxopentyl phosphate = 3-hydroxy-2,4-dioxopentyl phosphate. Involved in the degradation of phospho-AI-2, thereby terminating induction of the lsr operon and closing the AI-2 signaling cycle. Catalyzes the conversion of (4S)-4-hydroxy-5-phosphonooxypentane-2,3-dione (P-DPD) to 3-hydroxy-5-phosphonooxypentane-2,4-dione (P-HPD). This Escherichia coli O157:H7 protein is (4S)-4-hydroxy-5-phosphonooxypentane-2,3-dione isomerase.